The primary structure comprises 837 residues: E3 ubiquitin-protein ligase bre-1 (837 aa).

The interval 1–33 (MMKRSNEGIGGENYASSPSDDGQQKRRKIQFEP) is disordered. Residues 1-313 (MMKRSNEGIG…AKEIENLRLE (313 aa)) are interaction with ubc-1. Coiled coils occupy residues 54–89 (TSKLKQQLLYKNKRIAELEKENERSKRRQQTDESNF) and 185–253 (HKEL…KHMR). Positions 269–302 (GQSGGNGGATPSSSGTTNATEKKISAPDIPPSET) are disordered. Residues 277-287 (ATPSSSGTTNA) are compositionally biased toward polar residues. 3 coiled-coil regions span residues 300–397 (SETA…AFRS), 458–651 (DEMK…KAQT), and 677–763 (VQFK…NESV). Residues 785 to 824 (CPSCKTRPKDCIMLKCYHLFCETCIKTMYDTRQRKCPKCN) form an RING-type zinc finger.

Belongs to the BRE1 family. Interacts with ubc-1. Interacts with mrg-1. As to expression, in adult animals, expressed in oocytes, germ cells, pharyngeal and intestinal cells.

Its subcellular location is the nucleus. It carries out the reaction S-ubiquitinyl-[E2 ubiquitin-conjugating enzyme]-L-cysteine + [acceptor protein]-L-lysine = [E2 ubiquitin-conjugating enzyme]-L-cysteine + N(6)-ubiquitinyl-[acceptor protein]-L-lysine.. The protein operates within protein modification; protein ubiquitination. E3 ubiquitin-protein ligase that mediates monoubiquitination of 'Lys-117' of histone H2B. H2B 'Lys-117' ubiquitination gives a specific tag for epigenetic transcriptional activation and is also prerequisite for histone H3 'Lys-4' and 'Lys-79' methylation. Involved in regulating stem cell proliferative fate. In Caenorhabditis elegans, this protein is E3 ubiquitin-protein ligase bre-1 (rfp-1).